Consider the following 305-residue polypeptide: Tetraacyldisaccharide 4'-kinase (305 aa).

ATP is bound at residue 39–46; that stretch reads SVGGNGKT.

This sequence belongs to the LpxK family.

It carries out the reaction a lipid A disaccharide + ATP = a lipid IVA + ADP + H(+). It functions in the pathway glycolipid biosynthesis; lipid IV(A) biosynthesis; lipid IV(A) from (3R)-3-hydroxytetradecanoyl-[acyl-carrier-protein] and UDP-N-acetyl-alpha-D-glucosamine: step 6/6. Transfers the gamma-phosphate of ATP to the 4'-position of a tetraacyldisaccharide 1-phosphate intermediate (termed DS-1-P) to form tetraacyldisaccharide 1,4'-bis-phosphate (lipid IVA). The sequence is that of Tetraacyldisaccharide 4'-kinase from Pseudoalteromonas atlantica (strain T6c / ATCC BAA-1087).